We begin with the raw amino-acid sequence, 468 residues long: Serine--tRNA ligase (468 aa).

An L-serine-binding site is contributed by threonine 272–glutamate 274. Position 303 to 305 (arginine 303 to glutamate 305) interacts with ATP. Glutamate 326 serves as a coordination point for L-serine. Glutamate 390–serine 393 serves as a coordination point for ATP. Serine 426 provides a ligand contact to L-serine.

It belongs to the class-II aminoacyl-tRNA synthetase family. Type-1 seryl-tRNA synthetase subfamily. In terms of assembly, homodimer. The tRNA molecule binds across the dimer.

The protein resides in the cytoplasm. The catalysed reaction is tRNA(Ser) + L-serine + ATP = L-seryl-tRNA(Ser) + AMP + diphosphate + H(+). The enzyme catalyses tRNA(Sec) + L-serine + ATP = L-seryl-tRNA(Sec) + AMP + diphosphate + H(+). Its pathway is aminoacyl-tRNA biosynthesis; selenocysteinyl-tRNA(Sec) biosynthesis; L-seryl-tRNA(Sec) from L-serine and tRNA(Sec): step 1/1. Its function is as follows. Catalyzes the attachment of serine to tRNA(Ser). Is also able to aminoacylate tRNA(Sec) with serine, to form the misacylated tRNA L-seryl-tRNA(Sec), which will be further converted into selenocysteinyl-tRNA(Sec). The sequence is that of Serine--tRNA ligase from Xanthobacter autotrophicus (strain ATCC BAA-1158 / Py2).